Reading from the N-terminus, the 239-residue chain is Ribosomal RNA small subunit methyltransferase G (239 aa).

Residues Gly77, Phe82, 128–129 (AE), and Arg147 each bind S-adenosyl-L-methionine.

It belongs to the methyltransferase superfamily. RNA methyltransferase RsmG family.

Its subcellular location is the cytoplasm. In terms of biological role, specifically methylates the N7 position of guanine in position 535 of 16S rRNA. In Bacillus mycoides (strain KBAB4) (Bacillus weihenstephanensis), this protein is Ribosomal RNA small subunit methyltransferase G.